A 353-amino-acid polypeptide reads, in one-letter code: Holliday junction branch migration complex subunit RuvB (353 aa).

Residues 4–185 (ADRLITAAGG…FGIVQRLEFY (182 aa)) form a large ATPase domain (RuvB-L) region. Residues I24, R25, G66, K69, T70, T71, 132–134 (EDF), R175, Y185, and R222 each bind ATP. T70 provides a ligand contact to Mg(2+). Residues 186–256 (NIADLSTIVS…TADKALNLLD (71 aa)) are small ATPAse domain (RuvB-S). The interval 259 to 353 (EHGFDHQDRR…DDVVDDPADL (95 aa)) is head domain (RuvB-H). Residues R295, R314, and R319 each contribute to the DNA site.

It belongs to the RuvB family. In terms of assembly, homohexamer. Forms an RuvA(8)-RuvB(12)-Holliday junction (HJ) complex. HJ DNA is sandwiched between 2 RuvA tetramers; dsDNA enters through RuvA and exits via RuvB. An RuvB hexamer assembles on each DNA strand where it exits the tetramer. Each RuvB hexamer is contacted by two RuvA subunits (via domain III) on 2 adjacent RuvB subunits; this complex drives branch migration. In the full resolvosome a probable DNA-RuvA(4)-RuvB(12)-RuvC(2) complex forms which resolves the HJ.

Its subcellular location is the cytoplasm. The enzyme catalyses ATP + H2O = ADP + phosphate + H(+). Functionally, the RuvA-RuvB-RuvC complex processes Holliday junction (HJ) DNA during genetic recombination and DNA repair, while the RuvA-RuvB complex plays an important role in the rescue of blocked DNA replication forks via replication fork reversal (RFR). RuvA specifically binds to HJ cruciform DNA, conferring on it an open structure. The RuvB hexamer acts as an ATP-dependent pump, pulling dsDNA into and through the RuvAB complex. RuvB forms 2 homohexamers on either side of HJ DNA bound by 1 or 2 RuvA tetramers; 4 subunits per hexamer contact DNA at a time. Coordinated motions by a converter formed by DNA-disengaged RuvB subunits stimulates ATP hydrolysis and nucleotide exchange. Immobilization of the converter enables RuvB to convert the ATP-contained energy into a lever motion, pulling 2 nucleotides of DNA out of the RuvA tetramer per ATP hydrolyzed, thus driving DNA branch migration. The RuvB motors rotate together with the DNA substrate, which together with the progressing nucleotide cycle form the mechanistic basis for DNA recombination by continuous HJ branch migration. Branch migration allows RuvC to scan DNA until it finds its consensus sequence, where it cleaves and resolves cruciform DNA. This chain is Holliday junction branch migration complex subunit RuvB, found in Pseudomonas savastanoi pv. phaseolicola (strain 1448A / Race 6) (Pseudomonas syringae pv. phaseolicola (strain 1448A / Race 6)).